The following is a 226-amino-acid chain: Putative N-acetylmannosamine-6-phosphate 2-epimerase 1 (226 aa).

This sequence belongs to the NanE family.

The enzyme catalyses an N-acyl-D-glucosamine 6-phosphate = an N-acyl-D-mannosamine 6-phosphate. It functions in the pathway amino-sugar metabolism; N-acetylneuraminate degradation; D-fructose 6-phosphate from N-acetylneuraminate: step 3/5. Its function is as follows. Converts N-acetylmannosamine-6-phosphate (ManNAc-6-P) to N-acetylglucosamine-6-phosphate (GlcNAc-6-P). This chain is Putative N-acetylmannosamine-6-phosphate 2-epimerase 1, found in Salmonella paratyphi A (strain ATCC 9150 / SARB42).